We begin with the raw amino-acid sequence, 198 residues long: Ribosome maturation factor RimP (198 aa).

It belongs to the RimP family.

Its subcellular location is the cytoplasm. In terms of biological role, required for maturation of 30S ribosomal subunits. This chain is Ribosome maturation factor RimP, found in Rhizobium etli (strain CIAT 652).